The chain runs to 106 residues: uncharacterized protein (106 aa).

The chain crosses the membrane as a helical span at residues 9–27; sequence ALAALAFTLGLIGLAAWAL. The interval 84–106 is disordered; that stretch reads TPKGPPPASALSPSPVAEPEPVV.

It belongs to the FliO/MopB family.

It is found in the cell membrane. It localises to the bacterial flagellum basal body. This is an uncharacterized protein from Caulobacter vibrioides (strain ATCC 19089 / CIP 103742 / CB 15) (Caulobacter crescentus).